The chain runs to 465 residues: Cysteine--tRNA ligase (465 aa).

Residue Cys-30 coordinates Zn(2+). Positions 32-42 (ITVYDYCHIGH) match the 'HIGH' region motif. Positions 214, 239, and 243 each coordinate Zn(2+). The 'KMSKS' region motif lies at 271–275 (KMSKS). ATP is bound at residue Lys-274.

It belongs to the class-I aminoacyl-tRNA synthetase family. In terms of assembly, monomer. Zn(2+) is required as a cofactor.

The protein localises to the cytoplasm. The enzyme catalyses tRNA(Cys) + L-cysteine + ATP = L-cysteinyl-tRNA(Cys) + AMP + diphosphate. In Burkholderia thailandensis (strain ATCC 700388 / DSM 13276 / CCUG 48851 / CIP 106301 / E264), this protein is Cysteine--tRNA ligase.